The primary structure comprises 222 residues: MRTAYHEQLSELSERLSEMCGLAGIAMERATQALLQADLMLAEQVITDHEKIATRSARAEESAFVLLALQAPVAGDLRAIVSAIQMVAAIDRMGALALHVAKTARRRHPQHVLPEEVNGYFAEIGRVAVELGNGAQEVVLSRDPEKAAQIREKDDAMDELHRHLFSVLMDREWKHGVAAAVDVTLLGRFYERFADHAVEVARRVIFQATGSFPEDDTVPGSR.

Belongs to the PhoU family. As to quaternary structure, homodimer.

The protein resides in the cytoplasm. Plays a role in the regulation of phosphate uptake. The protein is Phosphate-specific transport system accessory protein PhoU homolog 1 (phoU1) of Mycobacterium leprae (strain TN).